The sequence spans 189 residues: MLQKQVSTTTTMTTQELAMEGEKQLEETIEAAFQIISAMNDELCNPSLWSTSATPSSAATTTGSNGSALVSADAAAIDGTSHHSESAGGGGGGGSGNSVLDEASLRYKNSVTSLRAVLAAIPNSQKAKASEMQNGLGSPESEDEIEKLEEQALSLRMEIAKKNVHVKELIDKLRELIADISTWQSPCSV.

The stretch at 138 to 178 forms a coiled coil; sequence SPESEDEIEKLEEQALSLRMEIAKKNVHVKELIDKLRELIA.

It belongs to the plant Mediator complex subunit 30 family. As to quaternary structure, component of the Mediator complex.

It is found in the nucleus. Component of the Mediator complex, a coactivator involved in the regulated transcription of nearly all RNA polymerase II-dependent genes. Mediator functions as a bridge to convey information from gene-specific regulatory proteins to the basal RNA polymerase II transcription machinery. The Mediator complex, having a compact conformation in its free form, is recruited to promoters by direct interactions with regulatory proteins and serves for the assembly of a functional preinitiation complex with RNA polymerase II and the general transcription factors. The sequence is that of Mediator of RNA polymerase II transcription subunit 30 (MED30) from Arabidopsis thaliana (Mouse-ear cress).